A 335-amino-acid chain; its full sequence is HTH-type transcriptional regulator MalR (335 aa).

The 55-residue stretch at 1–55 (MNIKDIARLSGVGVSTVSRVINNHPDVKQSTREKVLQIIKDSNYIPNNSARILKQ) folds into the HTH lacI-type domain. Positions 3-22 (IKDIARLSGVGVSTVSRVIN) form a DNA-binding region, H-T-H motif.

Repressor of glucanotransferase gene expression. This chain is HTH-type transcriptional regulator MalR, found in Clostridium butyricum.